The chain runs to 186 residues: Large ribosomal subunit protein bL12c (186 aa).

Polar residues predominate over residues 1–11 (MASTLSTITLR). 2 disordered regions span residues 1-23 (MAST…STHA) and 162-186 (EGVS…VSIA). A chloroplast-targeting transit peptide spans 1–53 (MASTLSTITLRSPSPSTASSTHASIPFPKKALEFPIRTPKLHHRRATFLRPLA). The span at 12 to 23 (SPSPSTASSTHA) shows a compositional bias: low complexity. Basic and acidic residues predominate over residues 162 to 180 (EGVSKDEAEDAKKQLEEAG).

This sequence belongs to the bacterial ribosomal protein bL12 family.

Its subcellular location is the plastid. The protein localises to the chloroplast. This chain is Large ribosomal subunit protein bL12c (RPL12), found in Nicotiana tabacum (Common tobacco).